The chain runs to 454 residues: tRNA modification GTPase MnmE (454 aa).

Residues arginine 23, glutamate 80, and lysine 120 each contribute to the (6S)-5-formyl-5,6,7,8-tetrahydrofolate site. The region spanning 216–377 (GMKVVIAGRP…LRNHLKQSMG (162 aa)) is the TrmE-type G domain. Asparagine 226 serves as a coordination point for K(+). GTP contacts are provided by residues 226-231 (NAGKSS), 245-251 (TDIAGTT), 270-273 (DTAG), 335-338 (NKAD), and 358-360 (SAR). Residue serine 230 coordinates Mg(2+). Residues threonine 245, isoleucine 247, and threonine 250 each coordinate K(+). Residue threonine 251 participates in Mg(2+) binding. Lysine 454 contacts (6S)-5-formyl-5,6,7,8-tetrahydrofolate.

It belongs to the TRAFAC class TrmE-Era-EngA-EngB-Septin-like GTPase superfamily. TrmE GTPase family. Homodimer. Heterotetramer of two MnmE and two MnmG subunits. The cofactor is K(+).

The protein resides in the cytoplasm. Exhibits a very high intrinsic GTPase hydrolysis rate. Involved in the addition of a carboxymethylaminomethyl (cmnm) group at the wobble position (U34) of certain tRNAs, forming tRNA-cmnm(5)s(2)U34. The protein is tRNA modification GTPase MnmE of Yersinia enterocolitica serotype O:8 / biotype 1B (strain NCTC 13174 / 8081).